The following is a 378-amino-acid chain: Alanine dehydrogenase (378 aa).

Substrate is bound by residues R15 and K74. The active-site Proton donor/acceptor is H95. NAD(+) is bound by residues S132, 176–177 (VV), D196, S218, 237–238 (VL), 265–268 (VAID), and 297–300 (VANM). D268 acts as the Proton donor/acceptor in catalysis.

This sequence belongs to the AlaDH/PNT family. As to quaternary structure, homohexamer. Trimer of dimer.

The protein resides in the cytoplasm. It catalyses the reaction L-alanine + NAD(+) + H2O = pyruvate + NH4(+) + NADH + H(+). The protein operates within amino-acid degradation; L-alanine degradation via dehydrogenase pathway; NH(3) and pyruvate from L-alanine: step 1/1. In terms of biological role, catalyzes the reversible oxidative deamination of L-alanine to pyruvate. Oxidative deamination proceeds through a sequential, ordered ternary-binary mechanism, where NAD(+) binds first followed by L-alanine; the products are released in the order ammonia, pyruvate and NADH. Disruption blocks sporulation probably in stage V; 20-30% sporulation can be restored if the media is supplemented with pyruvate, suggesting lack of pyruvate blocks sporulation. Thus it is a key factor in the assimilation of L-alanine as an energy source via the tricarboxylic acid cycle during sporulation. This Bacillus subtilis (strain 168) protein is Alanine dehydrogenase.